Here is a 209-residue protein sequence, read N- to C-terminus: Ribosomal RNA large subunit methyltransferase E (209 aa).

S-adenosyl-L-methionine contacts are provided by G63, W65, D83, D99, and D124. The Proton acceptor role is filled by K164.

This sequence belongs to the class I-like SAM-binding methyltransferase superfamily. RNA methyltransferase RlmE family.

The protein resides in the cytoplasm. The enzyme catalyses uridine(2552) in 23S rRNA + S-adenosyl-L-methionine = 2'-O-methyluridine(2552) in 23S rRNA + S-adenosyl-L-homocysteine + H(+). Functionally, specifically methylates the uridine in position 2552 of 23S rRNA at the 2'-O position of the ribose in the fully assembled 50S ribosomal subunit. This chain is Ribosomal RNA large subunit methyltransferase E, found in Shewanella amazonensis (strain ATCC BAA-1098 / SB2B).